We begin with the raw amino-acid sequence, 543 residues long: Acrosin-binding protein (543 aa).

An N-terminal signal peptide occupies residues 1-25 (MRKPAAGFLPSLLKVLLLPLAPAAA). The segment at 26–106 (QDSTQASTPG…ASWFESFCQF (81 aa)) is pro-ACR binding. Residues 26 to 273 (QDSTQASTPG…NPSSFAPRVR (248 aa)) constitute a propeptide, removed in mature form. A disordered region spans residues 185 to 272 (SLGGQEQAPE…SNPSSFAPRV (88 aa)). Residues 192–220 (APEHKQEQGVEHRQEPTQEHKQEEGQKQE) show a composition bias toward basic and acidic residues. The span at 221-231 (EQEEEQEEEGK) shows a compositional bias: acidic residues. The span at 232-243 (QEEGQGTKEGRE) shows a compositional bias: basic and acidic residues. Positions 319-427 (LPHTEALLVL…NQVGSPESGR (109 aa)) are pro-ACR binding.

In terms of assembly, binds proacrosin (pro-ACR). Does not bind the mature form of ACR. In terms of processing, phosphorylated on Tyr residues in capacitated sperm. Post-translationally, the N-terminus is blocked. Synthesized as a 60-kDa precursor, the 32-kDa mature form is post-translationally produced by the removal of the N-terminal half of the precursor during sperm maturation in the testis and/or epididymis. In terms of tissue distribution, expression restricted to testis in normal tissue. Expressed in a wide spectrum of cancers, including bladder, breast, liver, lung and colon cancers.

It localises to the secreted. Its subcellular location is the cytoplasmic vesicle. The protein resides in the secretory vesicle. The protein localises to the acrosome. Its function is as follows. Acrosomal protein that maintains proacrosin (pro-ACR) as an enzymatically inactive zymogen in the acrosome. Involved also in the acrosome formation. The sequence is that of Acrosin-binding protein from Homo sapiens (Human).